Consider the following 210-residue polypeptide: MSALREKLDHLIGQTELEVSEKQRSQLVGYVELLNKWNKAYNLTSVRDPQEMMVKHILDSIIVSTHLQGKRFIDVGTGPGLPGIPLSIMNPDCEFYLLDSLGKRIRFIKQVIHELGIDNVVPIQSRVEEFQPEEKFDAVLSRAFASMTDMVEWCHHLPKEQSGVFLALKGQHPRDEIDLLPEWCSVTDIKALQVPELDGERHLVTLSRQG.

S-adenosyl-L-methionine is bound by residues glycine 76, leucine 81, 127-128, and arginine 142; that span reads VE.

It belongs to the methyltransferase superfamily. RNA methyltransferase RsmG family.

The protein localises to the cytoplasm. It catalyses the reaction guanosine(527) in 16S rRNA + S-adenosyl-L-methionine = N(7)-methylguanosine(527) in 16S rRNA + S-adenosyl-L-homocysteine. Specifically methylates the N7 position of guanine in position 527 of 16S rRNA. The sequence is that of Ribosomal RNA small subunit methyltransferase G from Vibrio atlanticus (strain LGP32) (Vibrio splendidus (strain Mel32)).